Here is a 377-residue protein sequence, read N- to C-terminus: Probable aspartic-type endopeptidase CTSD (377 aa).

The Peptidase A1 domain occupies 1 to 292 (SLIDTGASRT…DFDKNRVGLA (292 aa)). D4 is an active-site residue. N-linked (GlcNAc...) asparagine glycosylation occurs at N58. Residue D186 is part of the active site. The disordered stretch occupies residues 296–351 (YGETKDPPSSSHPPPAPTSNKASGGSPGLPEQSGTSSATTSTTGEPSSGSTASPSA). Residues 328–351 (SGTSSATTSTTGEPSSGSTASPSA) are compositionally biased toward low complexity. A lipid anchor (GPI-anchor amidated serine) is attached at S350. A propeptide spans 351 to 377 (AASSVSMSAWLSLAVFLSTASSLILWD) (removed in mature form).

The protein belongs to the peptidase A1 family.

Its subcellular location is the cell membrane. Functionally, secreted aspartic-type endopeptidase which is secreted and contributes to virulence. In Arthroderma otae (strain ATCC MYA-4605 / CBS 113480) (Microsporum canis), this protein is Probable aspartic-type endopeptidase CTSD (CTSD).